Here is a 672-residue protein sequence, read N- to C-terminus: uncharacterized protein (672 aa).

Residues M1–L10 show a composition bias toward basic and acidic residues. The interval M1–P40 is disordered.

This is an uncharacterized protein from Mycobacterium tuberculosis (strain CDC 1551 / Oshkosh).